We begin with the raw amino-acid sequence, 30 residues long: Cycloviolacin-O2 (30 aa).

The cyclopeptide (Gly-Asn) cross-link spans 1 to 30 (GIPCGESCVWIPCISSAIGCSCKSKVCYRN). 3 disulfides stabilise this stretch: cysteine 4–cysteine 20, cysteine 8–cysteine 22, and cysteine 13–cysteine 27.

This is a cyclic peptide.

Probably participates in a plant defense mechanism. The sequence is that of Cycloviolacin-O2 from Viola biflora (Yellow wood violet).